A 219-amino-acid polypeptide reads, in one-letter code: Salivary IL-4-inducing protein (219 aa).

An N-terminal signal peptide occupies residues 1 to 19; sequence MKYLLTLLMALSLVNLMLT. The segment at 19-109 is disordered; it reads TRPTPEDDGG…KNDPRETYNK (91 aa). The segment covering 30-43 has biased composition (low complexity); it reads SEEPQTQETTGETT. The span at 72-107 shows a compositional bias: basic and acidic residues; it reads DDTAKKEDDGESKDGEGSEKSDKEKGEPKNDPRETY.

In terms of tissue distribution, salivary gland (at protein level).

Its subcellular location is the secreted. Its function is as follows. Induces expression of IL4 in host skin by diverting host CD4 cells away from Th1 and towards Th2 responsiveness. Induces expression of IL10 in host skin. Down-regulates expression of IL12B, IFN-gamma (IFNG) and TNF-alpha (TNF) in host skin. The sequence is that of Salivary IL-4-inducing protein from Aedes aegypti (Yellowfever mosquito).